Here is a 418-residue protein sequence, read N- to C-terminus: Serine hydroxymethyltransferase (418 aa).

Residues L121 and 125-127 (GHL) each bind (6S)-5,6,7,8-tetrahydrofolate. K230 carries the N6-(pyridoxal phosphate)lysine modification. Position 355 to 357 (355 to 357 (SPF)) interacts with (6S)-5,6,7,8-tetrahydrofolate.

This sequence belongs to the SHMT family. Homodimer. It depends on pyridoxal 5'-phosphate as a cofactor.

The protein resides in the cytoplasm. It catalyses the reaction (6R)-5,10-methylene-5,6,7,8-tetrahydrofolate + glycine + H2O = (6S)-5,6,7,8-tetrahydrofolate + L-serine. The protein operates within one-carbon metabolism; tetrahydrofolate interconversion. It functions in the pathway amino-acid biosynthesis; glycine biosynthesis; glycine from L-serine: step 1/1. Catalyzes the reversible interconversion of serine and glycine with tetrahydrofolate (THF) serving as the one-carbon carrier. This reaction serves as the major source of one-carbon groups required for the biosynthesis of purines, thymidylate, methionine, and other important biomolecules. Also exhibits THF-independent aldolase activity toward beta-hydroxyamino acids, producing glycine and aldehydes, via a retro-aldol mechanism. The sequence is that of Serine hydroxymethyltransferase from Streptococcus pyogenes serotype M1.